Here is a 347-residue protein sequence, read N- to C-terminus: D-alanine--D-alanine ligase (347 aa).

An ATP-grasp domain is found at 134-332; that stretch reads KLYAKDLGVK…LAQSLPKTPK (199 aa). 161-216 serves as a coordination point for ATP; it reads LIGFNFPFIIKPSNAGSSLGVSVVKEEKELIYALDGAFEYSKEILIEPFIQGVKEY. Positions 288, 300, and 302 each coordinate Mg(2+).

The protein belongs to the D-alanine--D-alanine ligase family. Mg(2+) serves as cofactor. Requires Mn(2+) as cofactor.

It localises to the cytoplasm. The enzyme catalyses 2 D-alanine + ATP = D-alanyl-D-alanine + ADP + phosphate + H(+). Its pathway is cell wall biogenesis; peptidoglycan biosynthesis. Cell wall formation. The protein is D-alanine--D-alanine ligase of Helicobacter pylori (strain Shi470).